A 162-amino-acid polypeptide reads, in one-letter code: CASP-like protein 1C2 (162 aa).

Over 1–6 the chain is Cytoplasmic; sequence MMKPKR. The helical transmembrane segment at 7–27 threads the bilayer; sequence LLSLLLRLIAVGATLAAVIIM. At 28–49 the chain is on the extracellular side; the sequence is ATSHEKGTFFAVSYEAKYTDTP. The chain crosses the membrane as a helical span at residues 50 to 70; that stretch reads AFKYFVIANAIVTVYGFLVLF. At 71–79 the chain is on the cytoplasmic side; that stretch reads HPPGSPLWR. A helical membrane pass occupies residues 80 to 100; sequence LVLALDLVFTMLLISSISAAL. Residues 101–130 lie on the Extracellular side of the membrane; it reads AVAQVGKNGNSRAGWLPVCGQVTKYCNQVT. Residues 131–151 traverse the membrane as a helical segment; that stretch reads GALVAGLIALITYIILLLHSI. The Cytoplasmic portion of the chain corresponds to 152 to 162; the sequence is YTFLNPLLEKA.

This sequence belongs to the Casparian strip membrane proteins (CASP) family. Homodimer and heterodimers.

It is found in the cell membrane. This Populus trichocarpa (Western balsam poplar) protein is CASP-like protein 1C2.